Consider the following 139-residue polypeptide: Nucleoside diphosphate kinase (139 aa).

Lysine 11, phenylalanine 59, arginine 87, threonine 93, arginine 104, and asparagine 114 together coordinate ATP. Histidine 117 acts as the Pros-phosphohistidine intermediate in catalysis.

It belongs to the NDK family. As to quaternary structure, homotetramer. The cofactor is Mg(2+).

The protein localises to the cytoplasm. The catalysed reaction is a 2'-deoxyribonucleoside 5'-diphosphate + ATP = a 2'-deoxyribonucleoside 5'-triphosphate + ADP. The enzyme catalyses a ribonucleoside 5'-diphosphate + ATP = a ribonucleoside 5'-triphosphate + ADP. Functionally, major role in the synthesis of nucleoside triphosphates other than ATP. The ATP gamma phosphate is transferred to the NDP beta phosphate via a ping-pong mechanism, using a phosphorylated active-site intermediate. The chain is Nucleoside diphosphate kinase from Wolbachia sp. subsp. Brugia malayi (strain TRS).